A 59-amino-acid polypeptide reads, in one-letter code: Putative conotoxin (59 aa).

The signal sequence occupies residues 1–25 (MGMRMMFTVFLLVVLATTVVPITLA). Positions 26-47 (SATDGRNAAANARVSPVISKSS) are excised as a propeptide.

Belongs to the conotoxin A superfamily. In terms of tissue distribution, expressed by the venom duct.

Its subcellular location is the secreted. Acts as a neurotoxin. In Conus imperialis (Imperial cone), this protein is Putative conotoxin.